The following is a 149-amino-acid chain: 3-hydroxyacyl-[acyl-carrier-protein] dehydratase FabZ (149 aa).

Residue H49 is part of the active site.

Belongs to the thioester dehydratase family. FabZ subfamily.

It is found in the cytoplasm. It carries out the reaction a (3R)-hydroxyacyl-[ACP] = a (2E)-enoyl-[ACP] + H2O. Its function is as follows. Involved in unsaturated fatty acids biosynthesis. Catalyzes the dehydration of short chain beta-hydroxyacyl-ACPs and long chain saturated and unsaturated beta-hydroxyacyl-ACPs. The sequence is that of 3-hydroxyacyl-[acyl-carrier-protein] dehydratase FabZ from Sulfurimonas denitrificans (strain ATCC 33889 / DSM 1251) (Thiomicrospira denitrificans (strain ATCC 33889 / DSM 1251)).